We begin with the raw amino-acid sequence, 421 residues long: POU domain, class 4, transcription factor 1 (421 aa).

Residues 57-66 carry the POU-IV box motif; that stretch reads RAEALAAVDI. Disordered regions lie at residues 94 to 117 and 133 to 200; these read STVPLAHHHHHHHHHQALEPGDLL and GAGA…GLGH. Residues 99–108 show a composition bias toward basic residues; that stretch reads AHHHHHHHHH. A compositionally biased stretch (gly residues) spans 133 to 186; it reads GAGAAGGGGGAHDGPGGGGGPGGGGGPGGGGPGGGGGGGGPGGGGGGPGGGLLG. Residues 262–339 form the POU-specific domain; that stretch reads DSDTDPRELE…ILQAWLEEAE (78 aa). A DNA-binding region (homeobox) is located at residues 357–416; the sequence is KKRKRTSIAAPEKRSLEAYFAVQPRPSSEKIAAIAEKLDLKKNVVRVWFCNQRQKQKRMK.

The protein belongs to the POU transcription factor family. Class-4 subfamily. Interacts (via N-terminus) with RIT2; the interaction controls POU4F1 transactivation activity on some neuronal target genes. Isoform 1 interacts with POU4F2 isoform 2; this interaction inhibits both POU4F1 DNA-binding and transcriptional activities. Isoform 1 interacts (C-terminus) with ESR1 (via DNA-binding domain); this interaction decreases the estrogen receptor ESR1 transcriptional activity in a DNA- and ligand 17-beta-estradiol-independent manner. In terms of tissue distribution, expressed in mature osteoclasts (at protein level). Brain, peripheral sensory nervous system and retina. In the adult nervous system, predominates in the medial habenula, superficial gray of the superior colliculus, red nucleus, mesencephalic nucleus of the trigeminal ganglion, nucleus ambiguus, inferior olivary nucleus, and peripheral sensory ganglia.

It localises to the nucleus. The protein resides in the cytoplasm. Functionally, multifunctional transcription factor with different regions mediating its different effects. Acts by binding (via its C-terminal domain) to sequences related to the consensus octamer motif 5'-ATGCAAAT-3' in the regulatory regions of its target genes. Regulates the expression of specific genes involved in differentiation and survival within a subset of neuronal lineages. It has been shown that activation of some of these genes requires its N-terminal domain, maybe through a neuronal-specific cofactor. Activates BCL2 expression and protects neuronal cells from apoptosis (via the N-terminal domain). Induces neuronal process outgrowth and the coordinate expression of genes encoding synaptic proteins. Exerts its major developmental effects in somatosensory neurons and in brainstem nuclei involved in motor control. Stimulates the binding affinity of the nuclear estrogene receptor ESR1 to DNA estrogen response element (ERE), and hence modulates ESR1-induced transcriptional activity. May positively regulate POU4F2 and POU4F3. Regulates dorsal root ganglion sensory neuron specification and axonal projection into the spinal cord. Plays a role in TNFSF11-mediated terminal osteoclast differentiation. Negatively regulates its own expression interacting directly with a highly conserved autoregulatory domain surrounding the transcription initiation site. In terms of biological role, able to act as transcription factor, cannot regulate the expression of the same subset of genes than isoform 1. Does not have antiapoptotic effect on neuronal cells. The sequence is that of POU domain, class 4, transcription factor 1 (Pou4f1) from Mus musculus (Mouse).